The chain runs to 92 residues: PqqA binding protein (92 aa).

The protein belongs to the PqqD family. Monomer. Interacts with PqqE.

The protein operates within cofactor biosynthesis; pyrroloquinoline quinone biosynthesis. Functionally, functions as a PqqA binding protein and presents PqqA to PqqE, in the pyrroloquinoline quinone (PQQ) biosynthetic pathway. The sequence is that of PqqA binding protein from Pseudomonas paraeruginosa (strain DSM 24068 / PA7) (Pseudomonas aeruginosa (strain PA7)).